A 250-amino-acid chain; its full sequence is Ribosomal RNA small subunit methyltransferase J (250 aa).

Residues 96-97 (RD) and aspartate 168 contribute to the S-adenosyl-L-methionine site.

It belongs to the methyltransferase superfamily. RsmJ family.

The protein resides in the cytoplasm. The enzyme catalyses guanosine(1516) in 16S rRNA + S-adenosyl-L-methionine = N(2)-methylguanosine(1516) in 16S rRNA + S-adenosyl-L-homocysteine + H(+). In terms of biological role, specifically methylates the guanosine in position 1516 of 16S rRNA. In Neisseria meningitidis serogroup B (strain ATCC BAA-335 / MC58), this protein is Ribosomal RNA small subunit methyltransferase J.